Reading from the N-terminus, the 162-residue chain is Disulfide bond formation protein B (162 aa).

Residues Met1–Ala8 lie on the Cytoplasmic side of the membrane. Residues Val9 to Ala25 traverse the membrane as a helical segment. The Periplasmic segment spans residues Ala26–Leu43. Cys35 and Cys38 form a disulfide bridge. A helical transmembrane segment spans residues Cys44 to Pro60. The Cytoplasmic segment spans residues Arg61–Leu67. Residues Phe68–Ala85 form a helical membrane-spanning segment. The Periplasmic portion of the chain corresponds to Tyr86–Val141. Residues Cys101 and Cys128 are joined by a disulfide bond. Residues Trp142–Arg160 traverse the membrane as a helical segment. Residues Ala161 to Lys162 lie on the Cytoplasmic side of the membrane.

It belongs to the DsbB family.

Its subcellular location is the cell inner membrane. In terms of biological role, required for disulfide bond formation in some periplasmic proteins. Acts by oxidizing the DsbA protein. The polypeptide is Disulfide bond formation protein B (Neisseria meningitidis serogroup B (strain ATCC BAA-335 / MC58)).